Reading from the N-terminus, the 75-residue chain is Pi-hexatoxin-Hi1b (75 aa).

6 disulfide bridges follow: cysteine 3–cysteine 18, cysteine 10–cysteine 23, cysteine 17–cysteine 33, cysteine 40–cysteine 55, cysteine 47–cysteine 60, and cysteine 54–cysteine 71. Domain repeat units lie at residues 3-33 (CIRK…FEVC) and 40-71 (CLVK…SSVC). The tract at residues 3–71 (CIRKWLSCVD…KRSGNKSSVC (69 aa)) is 2 X approximate repeats with cysteine pattern C-C-CC-C-C.

The protein belongs to the psalmotoxin-1 family. Double-knot toxin subfamily. As to expression, expressed by the venom gland.

Its subcellular location is the secreted. Functionally, this toxin potently and selectively inhibits ASIC1a, an isoform of the gene ASIC1. It incompletely inhibits ASIC1a activation in a pH-independent and slowly reversible manner. This toxin acts by binding to and stabilizing the closed state of the channel, thereby impeding the transition into a conducting state. This toxin may bind to the acidic pocket of ASIC1a, since mutation of a key residue of this pocket (Arg-350) abolishes the ability of the toxin to inhibit ASIC1a. In vivo, this toxin protects the brain from neuronal injury when administered up to 8 hours after stroke onset. The polypeptide is Pi-hexatoxin-Hi1b (Hadronyche infensa (Fraser island funnel-web spider)).